The chain runs to 334 residues: N-acetyl-gamma-glutamyl-phosphate reductase (334 aa).

The active site involves C154.

Belongs to the NAGSA dehydrogenase family. Type 1 subfamily.

The protein resides in the cytoplasm. It carries out the reaction N-acetyl-L-glutamate 5-semialdehyde + phosphate + NADP(+) = N-acetyl-L-glutamyl 5-phosphate + NADPH + H(+). It participates in amino-acid biosynthesis; L-arginine biosynthesis; N(2)-acetyl-L-ornithine from L-glutamate: step 3/4. In terms of biological role, catalyzes the NADPH-dependent reduction of N-acetyl-5-glutamyl phosphate to yield N-acetyl-L-glutamate 5-semialdehyde. The polypeptide is N-acetyl-gamma-glutamyl-phosphate reductase (Yersinia pseudotuberculosis serotype I (strain IP32953)).